The sequence spans 172 residues: MAEKRNIFLVGPMGAGKSTIGRHLAQQLHMEFLDSDTVIEERTGADIAWVFDVEGEEGFRKREEGVINDLTQEQGIVLATGGGSVISKESRNRLSARGVVVYLETTIEKQLARTQRDKKRPLLQTDEPREVLEALAKERNALYEEVSDYVVRTDDQSAKVVANQIIQMLEER.

14 to 19 (GAGKST) serves as a coordination point for ATP. Residue Ser18 coordinates Mg(2+). Residues Asp36, Arg60, and Gly82 each contribute to the substrate site. Position 120 (Arg120) interacts with ATP. Residue Arg139 participates in substrate binding. An ATP-binding site is contributed by Gln156.

It belongs to the shikimate kinase family. In terms of assembly, monomer. Mg(2+) is required as a cofactor.

The protein localises to the cytoplasm. The enzyme catalyses shikimate + ATP = 3-phosphoshikimate + ADP + H(+). The protein operates within metabolic intermediate biosynthesis; chorismate biosynthesis; chorismate from D-erythrose 4-phosphate and phosphoenolpyruvate: step 5/7. Functionally, catalyzes the specific phosphorylation of the 3-hydroxyl group of shikimic acid using ATP as a cosubstrate. In Aliivibrio fischeri (strain ATCC 700601 / ES114) (Vibrio fischeri), this protein is Shikimate kinase.